A 461-amino-acid polypeptide reads, in one-letter code: Ufm1-specific protease 2 (461 aa).

Residues C294, D418, and H420 contribute to the active site.

It belongs to the peptidase C78 family.

The protein localises to the endoplasmic reticulum. The protein resides in the cytoplasm. It is found in the nucleus. Its function is as follows. Thiol-dependent isopeptidase that specifically cleaves UFM1, a ubiquitin-like modifier protein, from conjugated proteins, such as CD274/PD-L1, CYB5R3, DDRGK1, MRE11, RPL26/uL24, TRIP4 and RPL26/uL24. While it is also able to mediate the processing of UFM1 precursors, a prerequisite for conjugation reactions, UFSP2 mainly acts as a protein deUFMylase that mediates deconjugation of UFM1 from target proteins. Mediates deUFMylation of RPL26/uL24, a critical step to release the UFM1 ribosome E3 ligase (UREL) complex during the recycling of 60S ribosome subunits from the endoplasmic reticulum. Catalyzes deUFMylation of TRIP4, regulating intracellular nuclear receptors transactivation and thereby regulate cell proliferation and differentiation. In Rattus norvegicus (Rat), this protein is Ufm1-specific protease 2.